A 204-amino-acid polypeptide reads, in one-letter code: Cytochrome c biogenesis ATP-binding export protein CcmA (204 aa).

The ABC transporter domain maps to 2–204 (IEVRDLGVSR…LDAEDLGGFL (203 aa)). 34–41 (GPNGIGKT) is a binding site for ATP.

It belongs to the ABC transporter superfamily. CcmA exporter (TC 3.A.1.107) family. As to quaternary structure, the complex is composed of two ATP-binding proteins (CcmA) and two transmembrane proteins (CcmB).

Its subcellular location is the cell inner membrane. It catalyses the reaction heme b(in) + ATP + H2O = heme b(out) + ADP + phosphate + H(+). Its function is as follows. Part of the ABC transporter complex CcmAB involved in the biogenesis of c-type cytochromes; once thought to export heme, this seems not to be the case, but its exact role is uncertain. Responsible for energy coupling to the transport system. The chain is Cytochrome c biogenesis ATP-binding export protein CcmA from Ruegeria sp. (strain TM1040) (Silicibacter sp.).